The primary structure comprises 253 residues: Sugar fermentation stimulation protein homolog (253 aa).

The protein belongs to the SfsA family.

The polypeptide is Sugar fermentation stimulation protein homolog (Prochlorococcus marinus (strain NATL1A)).